Reading from the N-terminus, the 284-residue chain is Bifunctional protein FolD (284 aa).

Residues 165–167, Thr-192, and Val-233 contribute to the NADP(+) site; that span reads GRG.

It belongs to the tetrahydrofolate dehydrogenase/cyclohydrolase family. As to quaternary structure, homodimer.

It catalyses the reaction (6R)-5,10-methylene-5,6,7,8-tetrahydrofolate + NADP(+) = (6R)-5,10-methenyltetrahydrofolate + NADPH. The catalysed reaction is (6R)-5,10-methenyltetrahydrofolate + H2O = (6R)-10-formyltetrahydrofolate + H(+). Its pathway is one-carbon metabolism; tetrahydrofolate interconversion. Its function is as follows. Catalyzes the oxidation of 5,10-methylenetetrahydrofolate to 5,10-methenyltetrahydrofolate and then the hydrolysis of 5,10-methenyltetrahydrofolate to 10-formyltetrahydrofolate. This chain is Bifunctional protein FolD, found in Corynebacterium efficiens (strain DSM 44549 / YS-314 / AJ 12310 / JCM 11189 / NBRC 100395).